Here is a 290-residue protein sequence, read N- to C-terminus: UPF0761 membrane protein YihY (290 aa).

Transmembrane regions (helical) follow at residues 44–64 (LLSL…FPMF), 104–124 (VGAC…DSAL), 140–160 (FAVY…SLAI), 183–203 (IFPL…VPTI), 210–230 (AIVG…GFAL), and 244–264 (VLAV…IVLL).

The protein belongs to the UPF0761 family.

It localises to the cell inner membrane. The polypeptide is UPF0761 membrane protein YihY (Escherichia coli O127:H6 (strain E2348/69 / EPEC)).